The sequence spans 158 residues: NADH-quinone oxidoreductase subunit B (158 aa).

[4Fe-4S] cluster-binding residues include Cys37, Cys38, Cys102, and Cys132.

The protein belongs to the complex I 20 kDa subunit family. In terms of assembly, NDH-1 is composed of 14 different subunits. Subunits NuoB, C, D, E, F, and G constitute the peripheral sector of the complex. [4Fe-4S] cluster is required as a cofactor.

The protein localises to the cell inner membrane. The enzyme catalyses a quinone + NADH + 5 H(+)(in) = a quinol + NAD(+) + 4 H(+)(out). In terms of biological role, NDH-1 shuttles electrons from NADH, via FMN and iron-sulfur (Fe-S) centers, to quinones in the respiratory chain. The immediate electron acceptor for the enzyme in this species is believed to be ubiquinone. Couples the redox reaction to proton translocation (for every two electrons transferred, four hydrogen ions are translocated across the cytoplasmic membrane), and thus conserves the redox energy in a proton gradient. This chain is NADH-quinone oxidoreductase subunit B, found in Acidithiobacillus ferrooxidans (strain ATCC 23270 / DSM 14882 / CIP 104768 / NCIMB 8455) (Ferrobacillus ferrooxidans (strain ATCC 23270)).